The following is a 72-amino-acid chain: uncharacterized protein (72 aa).

Residues 1–38 are compositionally biased toward low complexity; it reads MSIFSSLSSLSTGSLKSSVSSIENGSSSGSFGSNETSG. The segment at 1-42 is disordered; sequence MSIFSSLSSLSTGSLKSSVSSIENGSSSGSFGSNETSGWGQH.

This is an uncharacterized protein from Dictyostelium discoideum (Social amoeba).